The sequence spans 781 residues: Putative UPF0313 protein YPO0674/y3502/YP_2990 (781 aa).

Residues 368–646 enclose the Radical SAM core domain; sequence AYDMIRFSIN…KALLRYHDPA (279 aa). [4Fe-4S] cluster contacts are provided by cysteine 382, cysteine 386, and cysteine 389. Positions 681–781 are disordered; it reads REARRALRHH…AGSRGKNRQH (101 aa). Polar residues predominate over residues 696 to 708; it reads KHTSITRQRQPSN. A compositionally biased stretch (low complexity) spans 726–750; that stretch reads TSSAHSTSANQSTSANQSTSAAHST.

Belongs to the UPF0313 family. [4Fe-4S] cluster is required as a cofactor.

The polypeptide is Putative UPF0313 protein YPO0674/y3502/YP_2990 (Yersinia pestis).